A 188-amino-acid chain; its full sequence is FMN-dependent NADPH-azoreductase (188 aa).

This sequence belongs to the azoreductase type 2 family. Homotetramer. FMN serves as cofactor.

Functionally, catalyzes the reductive cleavage of azo bond in aromatic azo compounds to the corresponding amines. Requires NADPH, but not NADH, as an electron donor for its activity. In Staphylococcus saprophyticus subsp. saprophyticus (strain ATCC 15305 / DSM 20229 / NCIMB 8711 / NCTC 7292 / S-41), this protein is FMN-dependent NADPH-azoreductase (azo1).